A 238-amino-acid polypeptide reads, in one-letter code: Lactate utilization protein A (238 aa).

This sequence belongs to the LutA/YkgE family.

Is involved in L-lactate degradation and allows cells to grow with lactate as the sole carbon source. The chain is Lactate utilization protein A from Bacillus velezensis (strain DSM 23117 / BGSC 10A6 / LMG 26770 / FZB42) (Bacillus amyloliquefaciens subsp. plantarum).